A 493-amino-acid polypeptide reads, in one-letter code: Transcript termination protein A18 (493 aa).

Positions 100–256 constitute a Helicase ATP-binding domain; that stretch reads MIELKRPLYI…NSIINIAKLS (157 aa). 113-120 is an ATP binding site; it reads LACGFGKT. The DESH box signature appears at 206 to 209; sequence DESH.

This sequence belongs to the helicase family. Poxviruses subfamily. In terms of assembly, interacts with G2. Might be part of a transcription complex composed at least of G2, A18, and H5.

It is found in the virion. Its function is as follows. DNA helicase which seems to act as a postreplicative transcription termination factor. Involved in ATP-dependent release of nascent RNA. Forms a stable complex with single-stranded DNA, and to a lesser extent RNA. The sequence is that of Transcript termination protein A18 from Camelus.